We begin with the raw amino-acid sequence, 208 residues long: Neuroendocrine protein 7B2 (208 aa).

The signal sequence occupies residues 1–26 (MGMYSAIPLALPMVLLMVYGLTPSLG). A disulfide bridge links cysteine 120 with cysteine 129. The residue at position 204 (serine 204) is a Phosphoserine.

The protein belongs to the 7B2 family. As to quaternary structure, interacts with pcsk2 early in the secretory pathway. Dissociation occurs at later stages. Post-translationally, proteolytically cleaved in the Golgi by a furin-like convertase to generate bioactive peptides. Sulfated on tyrosine residues.

Its subcellular location is the secreted. In terms of biological role, acts as a molecular chaperone for pcsk2, preventing its premature activation in the regulated secretory pathway. Binds to inactive pcsk2 in the endoplasmic reticulum and facilitates its transport from there to later compartments of the secretory pathway where it is proteolytically matured and activated. Also required for cleavage of pcsk2 but does not appear to be involved in its folding. In Xenopus laevis (African clawed frog), this protein is Neuroendocrine protein 7B2 (scg5.L).